The sequence spans 308 residues: UDP-N-acetylenolpyruvoylglucosamine reductase (308 aa).

The 165-residue stretch at 33 to 197 (TGGNADFYLS…LEASFNLAPG (165 aa)) folds into the FAD-binding PCMH-type domain. Residue arginine 176 is part of the active site. Catalysis depends on serine 226, which acts as the Proton donor. Glutamate 296 is an active-site residue.

Belongs to the MurB family. The cofactor is FAD.

It is found in the cytoplasm. It carries out the reaction UDP-N-acetyl-alpha-D-muramate + NADP(+) = UDP-N-acetyl-3-O-(1-carboxyvinyl)-alpha-D-glucosamine + NADPH + H(+). It functions in the pathway cell wall biogenesis; peptidoglycan biosynthesis. Functionally, cell wall formation. This is UDP-N-acetylenolpyruvoylglucosamine reductase from Staphylococcus carnosus (strain TM300).